A 446-amino-acid chain; its full sequence is Na(+)-translocating NADH-quinone reductase subunit A (446 aa).

Belongs to the NqrA family. In terms of assembly, composed of six subunits; NqrA, NqrB, NqrC, NqrD, NqrE and NqrF.

The enzyme catalyses a ubiquinone + n Na(+)(in) + NADH + H(+) = a ubiquinol + n Na(+)(out) + NAD(+). Its function is as follows. NQR complex catalyzes the reduction of ubiquinone-1 to ubiquinol by two successive reactions, coupled with the transport of Na(+) ions from the cytoplasm to the periplasm. NqrA to NqrE are probably involved in the second step, the conversion of ubisemiquinone to ubiquinol. The chain is Na(+)-translocating NADH-quinone reductase subunit A from Histophilus somni (strain 2336) (Haemophilus somnus).